The sequence spans 160 residues: Cyclic pyranopterin monophosphate synthase (160 aa).

Substrate is bound by residues 75–77 (LCH) and 113–114 (ME). Asp128 is a catalytic residue.

It belongs to the MoaC family. In terms of assembly, homohexamer; trimer of dimers.

The catalysed reaction is (8S)-3',8-cyclo-7,8-dihydroguanosine 5'-triphosphate = cyclic pyranopterin phosphate + diphosphate. The protein operates within cofactor biosynthesis; molybdopterin biosynthesis. Its function is as follows. Catalyzes the conversion of (8S)-3',8-cyclo-7,8-dihydroguanosine 5'-triphosphate to cyclic pyranopterin monophosphate (cPMP). This Methylobacterium nodulans (strain LMG 21967 / CNCM I-2342 / ORS 2060) protein is Cyclic pyranopterin monophosphate synthase.